The following is a 291-amino-acid chain: Transcription initiation factor IIE subunit beta (291 aa).

The residue at position 1 (M1) is an N-acetylmethionine. The span at 1–13 (MDPSLLRERELFK) shows a compositional bias: basic and acidic residues. The tract at residues 1-63 (MDPSLLRERE…NSDHSNGSFN (63 aa)) is disordered. Polar residues predominate over residues 50–62 (GSKQNSDHSNGSF). S61 carries the phosphoserine modification. The segment at residues 66–146 (ALSGSSGYKF…YAFKPKYNVR (81 aa)) is a DNA-binding region (TFIIE beta). K74 bears the N6-acetyllysine mark. Residues 243–272 (SSMQESGPKKVAPIQRRKKPASQKKRRFKT) are disordered. Basic residues predominate over residues 257–271 (QRRKKPASQKKRRFK).

This sequence belongs to the TFIIE beta subunit family. Tetramer of two alpha and two beta chains. Interacts with FACT subunit SUPT16H. Interacts with ATF7IP. Interacts with SND1. Part of TBP-based Pol II pre-initiation complex (PIC), in which Pol II core assembles with general transcription factors and other specific initiation factors including GTF2E1, GTF2E2, GTF2F1, GTF2F2, TCEA1, ERCC2, ERCC3, GTF2H2, GTF2H3, GTF2H4, GTF2H5, GTF2A1, GTF2A2, GTF2B and TBP; this large multi-subunit PIC complex mediates DNA unwinding and targets Pol II core to the transcription start site where the first phosphodiester bond forms.

It is found in the nucleus. Functionally, recruits TFIIH to the initiation complex and stimulates the RNA polymerase II C-terminal domain kinase and DNA-dependent ATPase activities of TFIIH. Both TFIIH and TFIIE are required for promoter clearance by RNA polymerase. In Homo sapiens (Human), this protein is Transcription initiation factor IIE subunit beta (GTF2E2).